Consider the following 299-residue polypeptide: ATP phosphoribosyltransferase (299 aa).

The protein belongs to the ATP phosphoribosyltransferase family. Long subfamily. In terms of assembly, equilibrium between an active dimeric form, an inactive hexameric form and higher aggregates. Interconversion between the various forms is largely reversible and is influenced by the natural substrates and inhibitors of the enzyme. Requires Mg(2+) as cofactor.

The protein resides in the cytoplasm. It carries out the reaction 1-(5-phospho-beta-D-ribosyl)-ATP + diphosphate = 5-phospho-alpha-D-ribose 1-diphosphate + ATP. The protein operates within amino-acid biosynthesis; L-histidine biosynthesis; L-histidine from 5-phospho-alpha-D-ribose 1-diphosphate: step 1/9. Its activity is regulated as follows. Feedback inhibited by histidine. Its function is as follows. Catalyzes the condensation of ATP and 5-phosphoribose 1-diphosphate to form N'-(5'-phosphoribosyl)-ATP (PR-ATP). Has a crucial role in the pathway because the rate of histidine biosynthesis seems to be controlled primarily by regulation of HisG enzymatic activity. This is ATP phosphoribosyltransferase from Pectobacterium atrosepticum (strain SCRI 1043 / ATCC BAA-672) (Erwinia carotovora subsp. atroseptica).